The following is an 819-amino-acid chain: Disintegrin and metalloproteinase domain-containing protein 9 (819 aa).

The signal sequence occupies residues 1–28; the sequence is MGSGARFPSGTLRVRWLLLLGLVGPVLG. At 29–697 the chain is on the extracellular side; that stretch reads AARPGFQQTS…YNEMNTALRD (669 aa). N-linked (GlcNAc...) asparagine glycans are attached at residues N125, N144, N154, and N231. The Peptidase M12B domain occupies 212–406; sequence RYVELFIVVD…KGGNCLLNIP (195 aa). Cystine bridges form between C322–C401, C363–C385, C365–C370, C473–C493, C644–C656, C650–C662, and C664–C673. H347 is a Zn(2+) binding site. Residue E348 is part of the active site. Zn(2+)-binding residues include H351 and H357. N-linked (GlcNAc...) asparagine glycans are attached at residues N381 and N487. A Disintegrin domain is found at 414–501; that stretch reads APSCGNKLVD…FCQPDVFIQN (88 aa). In terms of domain architecture, EGF-like spans 644–698; sequence CDVQKKCHGHGVCNSNKNCHCENGWAPPNCETKGYGGSVDSGPTYNEMNTALRDG. The helical transmembrane segment at 698-718 threads the bilayer; it reads GLLVFFFLIVPLIVCAIFIFI. The Cytoplasmic segment spans residues 719–819; the sequence is KRDQLWRSYF…PAPPLYSSLT (101 aa). Disordered stretches follow at residues 734 to 763 and 780 to 819; these read QTYE…VTPP and AKQP…SSLT. Polar residues predominate over residues 735-750; that stretch reads TYESDGKNQANPSRQP. S758 is modified (phosphoserine). T761 carries the phosphothreonine modification.

In terms of assembly, interacts with SH3GL2 and SNX9 through its cytoplasmic tail. Interacts with ITGA6. Zn(2+) serves as cofactor. In terms of processing, proteolytically cleaved in the trans-Golgi network before it reaches the plasma membrane to generate a mature protein. The removal of the pro-domain occurs via cleavage at two different sites. Processed most likely by a pro-protein convertase such as furin, at the boundary between the pro-domain and the catalytic domain. An additional upstream cleavage pro-protein convertase site (Arg-56/Glu-57) has an important role in the activation of ADAM9. Post-translationally, phosphorylation is induced in vitro by phorbol-12-myristate-13-acetate (PMA). In terms of tissue distribution, widely expressed. Expressed in chondrocytes. Isoform 2 is highly expressed in liver and heart.

The protein localises to the cell membrane. It localises to the secreted. Synthesized as an inactive form which is proteolytically cleaved to generate an active enzyme. Processing at the upstream site is particularly important for activation of the proenzyme, whereas processing at the boundary between the pro-domain and the catalytic domain does not appear to be essential. Inhibited by hydroxamic acid-based inhibitors. Functionally, metalloprotease that cleaves and releases a number of molecules with important roles in tumorigenesis and angiogenesis, such as TEK, KDR, EPHB4, CD40, VCAM1 and CDH5. May mediate cell-cell, cell-matrix interactions and regulate the motility of cells via interactions with integrins. In terms of biological role, may act as alpha-secretase for amyloid precursor protein (APP). This Homo sapiens (Human) protein is Disintegrin and metalloproteinase domain-containing protein 9 (ADAM9).